The chain runs to 210 residues: 3 beta-hydroxysteroid dehydrogenase/Delta 5--&gt;4-isomerase (210 aa).

The active-site Proton acceptor is Tyr-29. Lys-33 provides a ligand contact to NAD(+).

The protein belongs to the 3-beta-HSD family.

The catalysed reaction is a 3beta-hydroxy-Delta(5)-steroid + NAD(+) = a 3-oxo-Delta(5)-steroid + NADH + H(+). It catalyses the reaction a 3-oxo-Delta(5)-steroid = a 3-oxo-Delta(4)-steroid. Its pathway is lipid metabolism; steroid biosynthesis. In terms of biological role, catalyzes the oxidative conversion of Delta(5)-ene-3-beta-hydroxy steroid, and the oxidative conversion of ketosteroids. The 3-beta-HSD enzymatic system plays a crucial role in the biosynthesis of all classes of hormonal steroids. During viral infection, steroid production contributes to virulence by inhibiting the host inflammatory response. The sequence is that of 3 beta-hydroxysteroid dehydrogenase/Delta 5--&gt;4-isomerase (OPG174) from Variola virus (isolate Human/India/Ind3/1967) (VARV).